A 373-amino-acid polypeptide reads, in one-letter code: 3 beta-hydroxysteroid dehydrogenase/Delta 5--&gt;4-isomerase (373 aa).

Residue Tyr155 is the Proton acceptor of the active site. NAD(+) is bound at residue Lys159. A helical membrane pass occupies residues 288 to 308; it reads IFLKYWLAFLLEIVSFLLSPI.

This sequence belongs to the 3-beta-HSD family.

Its subcellular location is the endoplasmic reticulum membrane. The protein resides in the mitochondrion membrane. It catalyses the reaction a 3beta-hydroxy-Delta(5)-steroid + NAD(+) = a 3-oxo-Delta(5)-steroid + NADH + H(+). The enzyme catalyses a 3-oxo-Delta(5)-steroid = a 3-oxo-Delta(4)-steroid. The protein operates within lipid metabolism; steroid biosynthesis. Its function is as follows. 3-beta-HSD is a bifunctional enzyme, that catalyzes the oxidative conversion of Delta(5)-ene-3-beta-hydroxy steroid, and the oxidative conversion of ketosteroids. The 3-beta-HSD enzymatic system plays a crucial role in the biosynthesis of all classes of hormonal steroids. The protein is 3 beta-hydroxysteroid dehydrogenase/Delta 5--&gt;4-isomerase (HSD3B) of Equus caballus (Horse).